A 393-amino-acid chain; its full sequence is NAD(P)H-quinone oxidoreductase subunit H, chloroplastic (393 aa).

Belongs to the complex I 49 kDa subunit family. As to quaternary structure, NDH is composed of at least 16 different subunits, 5 of which are encoded in the nucleus.

The protein resides in the plastid. It is found in the chloroplast thylakoid membrane. The catalysed reaction is a plastoquinone + NADH + (n+1) H(+)(in) = a plastoquinol + NAD(+) + n H(+)(out). It carries out the reaction a plastoquinone + NADPH + (n+1) H(+)(in) = a plastoquinol + NADP(+) + n H(+)(out). Functionally, NDH shuttles electrons from NAD(P)H:plastoquinone, via FMN and iron-sulfur (Fe-S) centers, to quinones in the photosynthetic chain and possibly in a chloroplast respiratory chain. The immediate electron acceptor for the enzyme in this species is believed to be plastoquinone. Couples the redox reaction to proton translocation, and thus conserves the redox energy in a proton gradient. This is NAD(P)H-quinone oxidoreductase subunit H, chloroplastic from Oenothera argillicola (Appalachian evening primrose).